The sequence spans 303 residues: Glutaminase (303 aa).

Substrate contacts are provided by Ser-63, Asn-113, Glu-157, Asn-164, Tyr-188, Tyr-239, and Val-257.

It belongs to the glutaminase family. Homotetramer.

It catalyses the reaction L-glutamine + H2O = L-glutamate + NH4(+). In Saccharopolyspora erythraea (strain ATCC 11635 / DSM 40517 / JCM 4748 / NBRC 13426 / NCIMB 8594 / NRRL 2338), this protein is Glutaminase.